The primary structure comprises 359 residues: MSSILSRYPEAETPVHGYFYSMVELAVVRVFVQHEIFDAIADDGTSIEELATKTGMEMNLLERLSNFLIASKVLSSPKPGFIGLPAETKMFQQRRAKLFYSHIFDAFMGSAVKWPQYLQTNGLAEPQKSNRSPFGLGAGYPDKSFYDVLDMMPERAQAFNSTMAIGLGDMPITGIYDFSWVTAHAGTDPKRTLIVDVGGGKGQAIKAIIEETPSIPASACVLQDLPNVIKDTPEEDGILRKVQKVGSSFFDKQSTRGALVYYIRRVLNDWPDDECVTILKNIREACASDSRLLISENLLPDEPSVSLAAADLWMMNFAGKRRNVRMFNDLASRSGFEISSIAKDKMSNSAVIEMLPVQS.

S-adenosyl-L-methionine contacts are provided by residues 198–199, Asp224, 248–249, Arg264, and Arg265; these read GG and SF.

Belongs to the class I-like SAM-binding methyltransferase superfamily. Cation-independent O-methyltransferase family.

The catalysed reaction is trichosetin + S-adenosyl-L-methionine = equisetin + S-adenosyl-L-homocysteine + H(+). It functions in the pathway mycotoxin biosynthesis. Its function is as follows. Methyltransferase; part of the gene cluster that mediates the biosynthesis of equisetin, a trans-fused decalin-containing tetramic acid with antimicrobial activity. The PKS module of eqxS together with the enoylreductase eqxC catalyze the formation of the polyketide unit which is then conjugated to L-serine by the condensation domain of the eqxS NRPS module. Activity of the Dieckmann cyclase domain (RED) results in release of the Dieckmann product intermediate. Diels-Alderase eqx3 is involved in endo-selective Diels-Alder cycloaddition to form the decalin ring, leading to the production of N-desmethylequisetin also called trichosetin. Subsequent N-methylation is carried out by eqxD to give equisetin. The chain is Methyltransferase eqxD from Fusarium heterosporum.